A 450-amino-acid chain; its full sequence is MNGQHSSPGTPVQRPSAGPVNQAQFSQQRTNQLTSLLHTMTMYQQLAQNVGLNTPQGQVYLLQAQTIRRQLQGHAQSGQLPNQQLLQQLQSNGALQQGTPEPSNTRPRPQLNAQEQTMLLVRHRQLQTAQNYLTEMKEALGRIKNELSTNERLDTSAREALVKQESELTVKIAQFTAAISNGIRSIQQLQNRQASSANGNNTGTSTPVNASTDTRKSTASTPQLQQTQAQANAPQQRINPETSSVPETPVGVSAANVSNESTELATSATQQSGLANNVEKSQTPSYMSANHLPKVDSKSPIPFSVPPSRATLTGGYASGSIGLSTPGLSRAPHYELDNGNRLLSKRKLHDLLQQIDSEEKIEPEVEELLLEIADEFVESVTNFACRLAKHRKSDTLDVRDVQLHLERNWNIRLPGFASDDIVKSARKTGPTPSYQQKQNAIGTAKSLNKD.

3 stretches are compositionally biased toward polar residues: residues 1 to 10 (MNGQHSSPGT), 19 to 29 (PVNQAQFSQQR), and 190 to 212 (QNRQASSANGNNTGTSTPVNAST). Disordered stretches follow at residues 1–29 (MNGQHSSPGTPVQRPSAGPVNQAQFSQQR) and 190–281 (QNRQ…VEKS). Residues 217-236 (STASTPQLQQTQAQANAPQQ) are compositionally biased toward low complexity. 2 stretches are compositionally biased toward polar residues: residues 237–246 (RINPETSSVP) and 255–281 (ANVSNESTELATSATQQSGLANNVEKS). A Phosphoserine modification is found at Ser297. The 76-residue stretch at 338–413 (NGNRLLSKRK…HLERNWNIRL (76 aa)) folds into the Histone-fold domain. Positions 426–450 (RKTGPTPSYQQKQNAIGTAKSLNKD) are disordered. Residues 430 to 441 (PTPSYQQKQNAI) are compositionally biased toward polar residues.

This sequence belongs to the TAF12 family. As to quaternary structure, component of the 1.8 MDa SAGA (Spt-Ada-Gcn5 acetyltransferase) complex, which is composed of 19 subunits tra1, spt7, taf5, ngg1/ada3, sgf73, spt20, spt8, taf12, taf6, hfi1/ada1, ubp8, gcn5, ada2, spt3, sgf29, taf10, taf9, sgf11 and sus1. The SAGA complex is composed of 4 modules, namely the HAT (histone acetyltransferase) module (gcn5, ada2, ngg1/ada3 and sgf29), the DUB (deubiquitinating) module (ubp8, sgf11, sgf73 and sus1), the core or TAF (TBP-associated factor) module (taf5, taf6, taf9, taf10 and taf12), and the Tra1 or SPT (Suppressor of Ty) module (tra1, hfi1/ada1, spt3, spt7, spt8 and spt20). The Tra1/SPT module binds activators, the core module recruits TBP (TATA-binding protein), the HAT module contains the histone H3 acetyltransferase gcn5, and the DUB module comprises the histone H2B deubiquitinase ubp8. Component of the 1.2 MDa TFIID complex, which is composed of TATA-binding protein (TBP) and the 14 TBP-associated factors (TAFs). It comprises 1 copy of each taf1, taf2, taf3, taf7, taf8, taf11, taf13, 2 copies of each taf4, taf5, taf6, taf9, taf10, taf12, and 3 copies of taf14. In TFIID, taf12 heterodimerizes with taf4, forming ultimately an octamer consisting of a taf6-taf9 heterotetramer core flanked by taf4-taf12 dimers on either side, similar to the histone H2A-H2B-H3-H4 octamer.

The protein resides in the nucleus. Functions as a component of both the DNA-binding general transcription initiation factor complex TFIID and the transcription coactivator SAGA complex. Binding of TFIID to a promoter (with or without TATA element) is the initial step in pre-initiation complex (PIC) formation. TFIID plays a key role in the regulation of gene expression by RNA polymerase II through different activities such as transcription activator interaction, core promoter recognition and selectivity, TFIIA and TFIIB interaction, chromatin modification (histone acetylation by TAF1), facilitation of DNA opening and initiation of transcription. SAGA acts as a general cofactor required for essentially all RNA polymerase II transcription. At the promoters, SAGA is required for transcription pre-initiation complex (PIC) recruitment. It influences RNA polymerase II transcriptional activity through different activities such as TBP interaction (via core/TAF module) and promoter selectivity, interaction with transcription activators (via Tra1/SPT module), and chromatin modification through histone acetylation (via HAT module) and deubiquitination (via DUB module). SAGA preferentially acetylates histones H3 (to form H3K9ac, H3K14ac, H3K18ac and H3K23ac) and H2B and deubiquitinates histone H2B. SAGA interacts with DNA via upstream activating sequences (UASs). In Schizosaccharomyces pombe (strain 972 / ATCC 24843) (Fission yeast), this protein is SAGA complex/transcription factor TFIID complex subunit Taf12.